The sequence spans 211 residues: SsrA-binding protein (211 aa).

Disordered stretches follow at residues 1 to 20 (MHRR…PERS) and 170 to 211 (RLRR…RHEN). Over residues 177–187 (QRNTQRSVTPR) the composition is skewed to polar residues.

This sequence belongs to the SmpB family.

The protein resides in the cytoplasm. Its function is as follows. Required for rescue of stalled ribosomes mediated by trans-translation. Binds to transfer-messenger RNA (tmRNA), required for stable association of tmRNA with ribosomes. tmRNA and SmpB together mimic tRNA shape, replacing the anticodon stem-loop with SmpB. tmRNA is encoded by the ssrA gene; the 2 termini fold to resemble tRNA(Ala) and it encodes a 'tag peptide', a short internal open reading frame. During trans-translation Ala-aminoacylated tmRNA acts like a tRNA, entering the A-site of stalled ribosomes, displacing the stalled mRNA. The ribosome then switches to translate the ORF on the tmRNA; the nascent peptide is terminated with the 'tag peptide' encoded by the tmRNA and targeted for degradation. The ribosome is freed to recommence translation, which seems to be the essential function of trans-translation. The sequence is that of SsrA-binding protein from Tropheryma whipplei (strain TW08/27) (Whipple's bacillus).